The following is a 179-amino-acid chain: Large ribosomal subunit protein uL5 (179 aa).

The protein belongs to the universal ribosomal protein uL5 family. In terms of assembly, part of the 50S ribosomal subunit; part of the 5S rRNA/L5/L18/L25 subcomplex. Contacts the 5S rRNA and the P site tRNA. Forms a bridge to the 30S subunit in the 70S ribosome.

Its function is as follows. This is one of the proteins that bind and probably mediate the attachment of the 5S RNA into the large ribosomal subunit, where it forms part of the central protuberance. In the 70S ribosome it contacts protein S13 of the 30S subunit (bridge B1b), connecting the 2 subunits; this bridge is implicated in subunit movement. Contacts the P site tRNA; the 5S rRNA and some of its associated proteins might help stabilize positioning of ribosome-bound tRNAs. This chain is Large ribosomal subunit protein uL5, found in Neisseria gonorrhoeae (strain ATCC 700825 / FA 1090).